The primary structure comprises 161 residues: Nucleotide-binding protein Sden_0770 (161 aa).

It belongs to the YajQ family.

Functionally, nucleotide-binding protein. In Shewanella denitrificans (strain OS217 / ATCC BAA-1090 / DSM 15013), this protein is Nucleotide-binding protein Sden_0770.